The primary structure comprises 425 residues: Serine--tRNA ligase (425 aa).

233–235 (TAE) provides a ligand contact to L-serine. Residue 264-266 (RRE) participates in ATP binding. E287 provides a ligand contact to L-serine. 351–354 (EISS) contacts ATP. S385 is an L-serine binding site.

It belongs to the class-II aminoacyl-tRNA synthetase family. Type-1 seryl-tRNA synthetase subfamily. In terms of assembly, homodimer. The tRNA molecule binds across the dimer.

It is found in the cytoplasm. The catalysed reaction is tRNA(Ser) + L-serine + ATP = L-seryl-tRNA(Ser) + AMP + diphosphate + H(+). It catalyses the reaction tRNA(Sec) + L-serine + ATP = L-seryl-tRNA(Sec) + AMP + diphosphate + H(+). It participates in aminoacyl-tRNA biosynthesis; selenocysteinyl-tRNA(Sec) biosynthesis; L-seryl-tRNA(Sec) from L-serine and tRNA(Sec): step 1/1. Its function is as follows. Catalyzes the attachment of serine to tRNA(Ser). Is also able to aminoacylate tRNA(Sec) with serine, to form the misacylated tRNA L-seryl-tRNA(Sec), which will be further converted into selenocysteinyl-tRNA(Sec). This chain is Serine--tRNA ligase, found in Synechococcus sp. (strain CC9605).